We begin with the raw amino-acid sequence, 696 residues long: MLVVAFASLLGAARAIMMPIDDPTTSDKFQITYANESLWDTLVMKNKTALESGELFDLGPDTKCFLPNMTRLHEQNVQSVNDPEYKQKLIDTLDMGAHIIDASLKNQCLVSQNGFWTYRYCGSGDFTQYHGVAPDPNDKLTYTLGRSSKQIENREFQLLYDDYGYYISEIIESGDICDVTGTPRAIEIQYTCGNVMRPGTLQWTRETKICHYEAQVIVPDLCQLELLSKNQDKKNAVPIICHMSNDVPDKHNIVDIVSNYDVSFVANQVYFLLPMNNSNVDRALLMYTGNATEDGLEMDPFPMEIYKKFIDVMNKMLGLGLLSPPDGKPFDVHDSYQWIGDIVDMHGNYLNRLRLDVDVNMEATLIIDKSINFTGPNNFQWYFRGSDRTKNSKSRFGSLTNDNMMLAGGSIINVDDISKENAQELLEKLVAAGKLSGVIEDNKITQGSPIEASKTKVTKASESTPVSEKNKKAKTVTKTIIRSRDKEEYFKENEKQGEENNAQVPFSAHNNEQHGTISKSERKEENTNQKQLANTQKGDTDTPPQSSQSSANDKLSRSGMGQKEPGVDEIGSELRGNSKKALGSNIDNSSGRSTLNDNSDRIAVENEAREIINSNAYDQSEASVDPNYRNDQQRLNSAKEHTFSQSKEKKSINSEEILETKILNSETLGNNDGVASDVKDEEVVESDRNGVIDDEL.

Positions 1-15 (MLVVAFASLLGAARA) are cleaved as a signal peptide. N35, N46, and N68 each carry an N-linked (GlcNAc...) asparagine glycan. The region spanning 106–224 (NQCLVSQNGF…QVIVPDLCQL (119 aa)) is the MRH domain. An intrachain disulfide couples C108 to C121. 6 residues coordinate a mannooligosaccharide derivative: W116, Q128, D178, R184, E206, and Y212. 2 disulfides stabilise this stretch: C177–C210 and C192–C222. N-linked (GlcNAc...) asparagine glycosylation is found at N276, N290, and N372. Disordered stretches follow at residues 450–600 (IEAS…DNSD) and 667–696 (TLGN…DDEL). A compositionally biased stretch (polar residues) spans 458–467 (TKASESTPVS). Residues 482–498 (RSRDKEEYFKENEKQGE) are compositionally biased toward basic and acidic residues. Composition is skewed to polar residues over residues 499-518 (ENNA…GTIS), 528-553 (NQKQ…SAND), and 585-597 (NIDN…TLND). N588 is a glycosylation site (N-linked (GlcNAc...) asparagine). The segment covering 685 to 696 (ESDRNGVIDDEL) has biased composition (basic and acidic residues).

Belongs to the OS-9 family. In terms of assembly, interacts with missfolded ER lumenal proteins.

The protein resides in the endoplasmic reticulum membrane. Its function is as follows. Lectin involved in the quality control of the secretory pathway. As a member of the endoplasmic reticulum-associated degradation lumenal (ERAD-L) surveillance system, targets misfolded endoplasmic reticulum lumenal glycoproteins for degradation. The chain is Protein OS-9 homolog (YOS9) from Candida glabrata (strain ATCC 2001 / BCRC 20586 / JCM 3761 / NBRC 0622 / NRRL Y-65 / CBS 138) (Yeast).